The primary structure comprises 99 residues: Aspartyl/glutamyl-tRNA(Asn/Gln) amidotransferase subunit C (99 aa).

Belongs to the GatC family. In terms of assembly, heterotrimer of A, B and C subunits.

The catalysed reaction is L-glutamyl-tRNA(Gln) + L-glutamine + ATP + H2O = L-glutaminyl-tRNA(Gln) + L-glutamate + ADP + phosphate + H(+). It carries out the reaction L-aspartyl-tRNA(Asn) + L-glutamine + ATP + H2O = L-asparaginyl-tRNA(Asn) + L-glutamate + ADP + phosphate + 2 H(+). Its function is as follows. Allows the formation of correctly charged Asn-tRNA(Asn) or Gln-tRNA(Gln) through the transamidation of misacylated Asp-tRNA(Asn) or Glu-tRNA(Gln) in organisms which lack either or both of asparaginyl-tRNA or glutaminyl-tRNA synthetases. The reaction takes place in the presence of glutamine and ATP through an activated phospho-Asp-tRNA(Asn) or phospho-Glu-tRNA(Gln). This Bifidobacterium longum (strain NCC 2705) protein is Aspartyl/glutamyl-tRNA(Asn/Gln) amidotransferase subunit C.